The primary structure comprises 289 residues: 4-diphosphocytidyl-2-C-methyl-D-erythritol kinase (289 aa).

Lysine 10 is a catalytic residue. An ATP-binding site is contributed by proline 94–serine 104. Aspartate 136 is a catalytic residue.

It belongs to the GHMP kinase family. IspE subfamily.

It carries out the reaction 4-CDP-2-C-methyl-D-erythritol + ATP = 4-CDP-2-C-methyl-D-erythritol 2-phosphate + ADP + H(+). The protein operates within isoprenoid biosynthesis; isopentenyl diphosphate biosynthesis via DXP pathway; isopentenyl diphosphate from 1-deoxy-D-xylulose 5-phosphate: step 3/6. In terms of biological role, catalyzes the phosphorylation of the position 2 hydroxy group of 4-diphosphocytidyl-2C-methyl-D-erythritol. The sequence is that of 4-diphosphocytidyl-2-C-methyl-D-erythritol kinase from Bacillus velezensis (strain DSM 23117 / BGSC 10A6 / LMG 26770 / FZB42) (Bacillus amyloliquefaciens subsp. plantarum).